Reading from the N-terminus, the 682-residue chain is MSRKQLALFEPTLVVQALKEAVKKLNPQAQWRNPVMFIVWIGSLLTTCISIAMASGAMPGNALFSAAISGWLWITVLFANFAEALAEGRSKAQANSLKGVKKTAFARKLREPKYGAAADKVPADQLRKGDIVLVEAGDIIPCDGEVIEGGASVDESAITGESAPVIRESGGDFASVTGGTRILSDWLVIECSVNPGETFLDRMIAMVEGAQRRKTPNEIALTILLIALTIVFLLATATLWPFSAWGGNAVSVTVLVALLVCLIPTTIGGLLSAIGVAGMSRMLGANVIATSGRAVEAAGDVDVLLLDKTGTITLGNRQASEFIPAQGVDEKTLADAAQLASLADETPEGRSIVILAKQRFNLRERDVQSLHATFVPFTAQSRMSGINIDNRMIRKGSVDAIRRHVEANGGHFPTDVDQKVDQVARQGATPLVVVEGSRVLGVIALKDIVKGGIKERFAQLRKMGIKTVMITGDNRLTAAAIAAEAGVDDFLAEATPEAKLALIRQYQAEGRLVAMTGDGTNDAPALAQADVAVAMNSGTQAAKEAGNMVDLDSNPTKLIEVVHIGKQMLMTRGSLTTFSIANDVAKYFAIIPAAFAATYPQLNALNIMCLHSPDSAILSAVIFNALIIVFLIPLALKGVSYKPLTASAMLRRNLWIYGLGGLLVPFIGIKVIDLLLTVCGLV.

A run of 4 helical transmembrane segments spans residues 34 to 54 (PVMF…IAMA), 62 to 82 (ALFS…ANFA), 219 to 239 (IALT…TATL), and 254 to 274 (VLVA…LSAI). Aspartate 307 (4-aspartylphosphate intermediate) is an active-site residue. ATP-binding positions include aspartate 344, glutamate 348, 377 to 384 (FTAQSRMS), and lysine 395. Aspartate 518 and aspartate 522 together coordinate Mg(2+). The next 3 helical transmembrane spans lie at 588–608 (FAII…LNIM), 616–636 (AILS…PLAL), and 656–676 (IYGL…DLLL).

The protein belongs to the cation transport ATPase (P-type) (TC 3.A.3) family. Type IA subfamily. The system is composed of three essential subunits: KdpA, KdpB and KdpC.

It is found in the cell inner membrane. It catalyses the reaction K(+)(out) + ATP + H2O = K(+)(in) + ADP + phosphate + H(+). Its function is as follows. Part of the high-affinity ATP-driven potassium transport (or Kdp) system, which catalyzes the hydrolysis of ATP coupled with the electrogenic transport of potassium into the cytoplasm. This subunit is responsible for energy coupling to the transport system and for the release of the potassium ions to the cytoplasm. The sequence is that of Potassium-transporting ATPase ATP-binding subunit from Escherichia coli (strain K12 / MC4100 / BW2952).